Consider the following 332-residue polypeptide: UPF0194 membrane protein YbhG (332 aa).

An N-terminal signal peptide occupies residues methionine 1–alanine 16. Positions glutamate 108–alanine 209 form a coiled coil.

It belongs to the UPF0194 family.

Its subcellular location is the periplasm. The sequence is that of UPF0194 membrane protein YbhG from Escherichia coli O127:H6 (strain E2348/69 / EPEC).